The sequence spans 403 residues: Phosphopentomutase (403 aa).

Residues Asp13, Asp298, His303, Asp339, His340, and His351 each coordinate Mn(2+).

The protein belongs to the phosphopentomutase family. It depends on Mn(2+) as a cofactor.

The protein resides in the cytoplasm. It carries out the reaction 2-deoxy-alpha-D-ribose 1-phosphate = 2-deoxy-D-ribose 5-phosphate. It catalyses the reaction alpha-D-ribose 1-phosphate = D-ribose 5-phosphate. It participates in carbohydrate degradation; 2-deoxy-D-ribose 1-phosphate degradation; D-glyceraldehyde 3-phosphate and acetaldehyde from 2-deoxy-alpha-D-ribose 1-phosphate: step 1/2. Isomerase that catalyzes the conversion of deoxy-ribose 1-phosphate (dRib-1-P) and ribose 1-phosphate (Rib-1-P) to deoxy-ribose 5-phosphate (dRib-5-P) and ribose 5-phosphate (Rib-5-P), respectively. This chain is Phosphopentomutase, found in Streptococcus pneumoniae (strain JJA).